Reading from the N-terminus, the 248-residue chain is ATP synthase subunit a, chloroplastic (248 aa).

A run of 5 helical transmembrane segments spans residues 37–57 (AQVLITSWIVIAILLSLAVLA), 96–116 (VPFIGTMFLFIFVSNWSGALF), 135–155 (INTTVALALLTSVAYFYAGLH), 200–220 (LVVAVLISLVPLVVPIPMMFL), and 221–241 (GLFTSAIQALIFATLAAAYIG).

The protein belongs to the ATPase A chain family. F-type ATPases have 2 components, CF(1) - the catalytic core - and CF(0) - the membrane proton channel. CF(1) has five subunits: alpha(3), beta(3), gamma(1), delta(1), epsilon(1). CF(0) has four main subunits: a, b, b' and c.

It is found in the plastid. Its subcellular location is the chloroplast thylakoid membrane. Functionally, key component of the proton channel; it plays a direct role in the translocation of protons across the membrane. This chain is ATP synthase subunit a, chloroplastic, found in Marchantia polymorpha (Common liverwort).